The sequence spans 278 residues: Phosphatidylglycerol--prolipoprotein diacylglyceryl transferase (278 aa).

Helical transmembrane passes span 17–37 (LAVRWYGLMYLLGFSLFILLG), 57–77 (ALFYGVLGVILGGRLGHVLFY), 89–109 (ILAIWQGGMSFHGGFLGVAIA), and 119–139 (LSWLAVTDFIAPLVPLGLGAG). An a 1,2-diacyl-sn-glycero-3-phospho-(1'-sn-glycerol)-binding site is contributed by Arg-140. 3 helical membrane-spanning segments follow: residues 174-194 (QLYEFALEGLVLFALIWLYSA), 200-220 (GAVTGMFMIGYGAFRSFCEFF), and 233-253 (LGISMGQWLSLPMIAAGIALL).

This sequence belongs to the Lgt family.

It is found in the cell inner membrane. It catalyses the reaction L-cysteinyl-[prolipoprotein] + a 1,2-diacyl-sn-glycero-3-phospho-(1'-sn-glycerol) = an S-1,2-diacyl-sn-glyceryl-L-cysteinyl-[prolipoprotein] + sn-glycerol 1-phosphate + H(+). It functions in the pathway protein modification; lipoprotein biosynthesis (diacylglyceryl transfer). Functionally, catalyzes the transfer of the diacylglyceryl group from phosphatidylglycerol to the sulfhydryl group of the N-terminal cysteine of a prolipoprotein, the first step in the formation of mature lipoproteins. In Nitrosomonas europaea (strain ATCC 19718 / CIP 103999 / KCTC 2705 / NBRC 14298), this protein is Phosphatidylglycerol--prolipoprotein diacylglyceryl transferase.